The following is a 791-amino-acid chain: Centrosomal protein of 89 kDa (791 aa).

The disordered stretch occupies residues 27 to 203 (APKPAVPRTP…HTQQKDVKHS (177 aa)). Residues 30–45 (PAVPRTPPPRSPNPSP) are compositionally biased toward pro residues. S50 is subject to Phosphoserine. Residues 50–62 (SALAAAILATTLT) show a composition bias toward low complexity. The segment covering 75–89 (SRSESDASDIEKDSF) has biased composition (basic and acidic residues). A compositionally biased stretch (polar residues) spans 94–107 (ATTSELRLRQSWQN). The segment covering 137 to 161 (RESESTWKDVGDGRDATYTVPHRDQ) has biased composition (basic and acidic residues). Residues 181–190 (SDSSSSSSSS) are compositionally biased toward low complexity. Coiled coils occupy residues 252 to 291 (SANQ…TEKA), 370 to 598 (LLAY…MGKE), and 670 to 737 (HRLK…SLLQ).

The protein localises to the cytoplasm. The protein resides in the cytosol. Its subcellular location is the cytoskeleton. It localises to the microtubule organizing center. It is found in the centrosome. The protein localises to the spindle pole. The protein resides in the centriole. Its subcellular location is the mitochondrion intermembrane space. Required for ciliogenesis. Also plays a role in mitochondrial metabolism where it may modulate complex IV activity. This chain is Centrosomal protein of 89 kDa (Cep89), found in Mus musculus (Mouse).